Consider the following 408-residue polypeptide: Na(+)/H(+) antiporter NhaA 2 (408 aa).

11 helical membrane passes run 36 to 56 (GILL…GLGV), 79 to 99 (ILLW…GLEI), 115 to 135 (ALPV…YFLF), 145 to 165 (GWGI…SLLG), 174 to 194 (IFLA…IAVF), 197 to 217 (SELH…LMVF), 225 to 245 (LFFY…SGIH), 281 to 301 (FIIM…SEML), 310 to 330 (LGII…MSWL), 348 to 368 (VLGL…IALL), and 381 to 401 (FAIL…LSSY).

Belongs to the NhaA Na(+)/H(+) (TC 2.A.33) antiporter family.

The protein resides in the cell inner membrane. It catalyses the reaction Na(+)(in) + 2 H(+)(out) = Na(+)(out) + 2 H(+)(in). In terms of biological role, na(+)/H(+) antiporter that extrudes sodium in exchange for external protons. The sequence is that of Na(+)/H(+) antiporter NhaA 2 from Flavobacterium johnsoniae (strain ATCC 17061 / DSM 2064 / JCM 8514 / BCRC 14874 / CCUG 350202 / NBRC 14942 / NCIMB 11054 / UW101) (Cytophaga johnsonae).